The sequence spans 100 residues: uncharacterized protein (100 aa).

An HTH arsR-type domain is found at 1-100 (MEPIEVFKAL…KLADFLKTEI (100 aa)). The segment at residues 44 to 67 (VSQITDKLKMTQSTASQYLTILLR) is a DNA-binding region (H-T-H motif).

This is an uncharacterized protein from Bacillus subtilis (strain 168).